The primary structure comprises 275 residues: tRNA (guanine-N(7)-)-methyltransferase (275 aa).

Residues 1-73 (MRHHGRMHAR…GGQQDTWERL (73 aa)) are disordered. The segment covering 46-59 (AHRHRRVTSFRSRR) has biased composition (basic residues). S-adenosyl-L-methionine-binding residues include glutamate 107, glutamate 132, aspartate 159, and aspartate 182. Residue aspartate 182 is part of the active site. Residues lysine 186, aspartate 218, and 254–257 (TKYE) contribute to the substrate site.

This sequence belongs to the class I-like SAM-binding methyltransferase superfamily. TrmB family.

The catalysed reaction is guanosine(46) in tRNA + S-adenosyl-L-methionine = N(7)-methylguanosine(46) in tRNA + S-adenosyl-L-homocysteine. It participates in tRNA modification; N(7)-methylguanine-tRNA biosynthesis. In terms of biological role, catalyzes the formation of N(7)-methylguanine at position 46 (m7G46) in tRNA. The protein is tRNA (guanine-N(7)-)-methyltransferase of Mycobacterium sp. (strain KMS).